Here is a 278-residue protein sequence, read N- to C-terminus: Esterase dbaE (278 aa).

Residues Ser124, Asp220, and His248 each act as charge relay system in the active site.

Belongs to the LovG family.

It participates in secondary metabolite biosynthesis. Its function is as follows. Esterase; part of the gene cluster that mediates the biosynthesis of the antibiotic 2,4-dihydroxy-3-methyl-6-(2-oxopropyl)benzaldehyde (DHMBA) and its derivatives. The direct non-reducing polyketide synthase dbaI product is 2,4-dihydroxy-3-methyl-6-(2-oxopropyl)benzaldehyde (DHMBA), produced by condensation of one acetyl-CoA starter unit with 4 malonyl-CoA units and one methylation step. The FAD-dependent monooxygenase dbaH is responsible for the synthesis of yellow pigments derived from the oxidation of DHMBA. The roles of dbaB, C, E and F have still to be determined. This is Esterase dbaE from Emericella nidulans (strain FGSC A4 / ATCC 38163 / CBS 112.46 / NRRL 194 / M139) (Aspergillus nidulans).